The chain runs to 717 residues: Probable E3 ubiquitin-protein ligase WAVH2 (717 aa).

Composition is skewed to polar residues over residues 13-28 (VSSN…SLHT) and 85-94 (RTTSNATPRT). The tract at residues 13 to 120 (VSSNQDKPQQ…SSSSSSSQGG (108 aa)) is disordered. The segment covering 95–117 (SNSSSPKFFSNPSSPKSSSSSSS) has biased composition (low complexity). The segment at 140–184 (CAICLQRVNSNQSNSTAAIFTAECSHSFHLSCVNGLEDKRCPFCS) adopts an RING-type; atypical zinc-finger fold. In terms of domain architecture, VWFA spans 326 to 456 (DLVTVLDLSN…LNATRIPFVV (131 aa)).

As to expression, expressed in root tips, cotyledons, leaf primordia and hypocotyls.

The catalysed reaction is S-ubiquitinyl-[E2 ubiquitin-conjugating enzyme]-L-cysteine + [acceptor protein]-L-lysine = [E2 ubiquitin-conjugating enzyme]-L-cysteine + N(6)-ubiquitinyl-[acceptor protein]-L-lysine.. Probable E3 ubiquitin-protein ligase involved in the regulation of root growth. Acts as a positive regulator of root gravitropism. This Arabidopsis thaliana (Mouse-ear cress) protein is Probable E3 ubiquitin-protein ligase WAVH2.